Here is a 294-residue protein sequence, read N- to C-terminus: Ferredoxin--NADP reductase (294 aa).

The 125-residue stretch at 13–137 (KNPYIGKCLS…TGPVGKEMLL (125 aa)) folds into the FAD-binding FR-type domain. FAD is bound by residues 72-75 (RLYS), 93-95 (CVR), Tyr-99, 111-113 (VCS), and Thr-152. Ser-75 and Arg-95 together coordinate NADP(+). NADP(+) contacts are provided by residues Thr-152, 184-185 (IP), 214-215 (SR), Lys-224, 224-228 (KMYIQ), 253-254 (GL), and Glu-292.

It belongs to the ferredoxin--NADP reductase type 1 family. The cofactor is FAD.

It localises to the cellular thylakoid membrane. The catalysed reaction is 2 reduced [2Fe-2S]-[ferredoxin] + NADP(+) + H(+) = 2 oxidized [2Fe-2S]-[ferredoxin] + NADPH. The protein is Ferredoxin--NADP reductase (petH) of Spirulina sp.